The sequence spans 155 residues: 3-dehydroquinate dehydratase (155 aa).

The active-site Proton acceptor is Tyr22. 3 residues coordinate substrate: Asn73, His79, and Asp86. His99 (proton donor) is an active-site residue. Substrate is bound by residues Ile100–Ser101 and Arg110.

It belongs to the type-II 3-dehydroquinase family. In terms of assembly, homododecamer.

The enzyme catalyses 3-dehydroquinate = 3-dehydroshikimate + H2O. It participates in metabolic intermediate biosynthesis; chorismate biosynthesis; chorismate from D-erythrose 4-phosphate and phosphoenolpyruvate: step 3/7. Catalyzes a trans-dehydration via an enolate intermediate. This Campylobacter hominis (strain ATCC BAA-381 / DSM 21671 / CCUG 45161 / LMG 19568 / NCTC 13146 / CH001A) protein is 3-dehydroquinate dehydratase.